We begin with the raw amino-acid sequence, 189 residues long: dTTP/UTP pyrophosphatase (189 aa).

Catalysis depends on Asp-70, which acts as the Proton acceptor.

It belongs to the Maf family. YhdE subfamily. The cofactor is a divalent metal cation.

It is found in the cytoplasm. The catalysed reaction is dTTP + H2O = dTMP + diphosphate + H(+). It catalyses the reaction UTP + H2O = UMP + diphosphate + H(+). Nucleoside triphosphate pyrophosphatase that hydrolyzes dTTP and UTP. May have a dual role in cell division arrest and in preventing the incorporation of modified nucleotides into cellular nucleic acids. The sequence is that of dTTP/UTP pyrophosphatase from Akkermansia muciniphila (strain ATCC BAA-835 / DSM 22959 / JCM 33894 / BCRC 81048 / CCUG 64013 / CIP 107961 / Muc).